The primary structure comprises 432 residues: Adenylosuccinate synthetase (432 aa).

GTP is bound by residues glycine 13 to lysine 19 and glycine 41 to threonine 43. The active-site Proton acceptor is aspartate 14. Aspartate 14 and glycine 41 together coordinate Mg(2+). IMP is bound by residues aspartate 14–lysine 17, asparagine 39–histidine 42, threonine 130, arginine 144, glutamine 225, threonine 240, and arginine 304. Histidine 42 serves as the catalytic Proton donor. Alanine 300–arginine 306 contributes to the substrate binding site. GTP contacts are provided by residues arginine 306, lysine 332–aspartate 334, and serine 415–glycine 417.

Belongs to the adenylosuccinate synthetase family. In terms of assembly, homodimer. Mg(2+) serves as cofactor.

The protein localises to the cytoplasm. It carries out the reaction IMP + L-aspartate + GTP = N(6)-(1,2-dicarboxyethyl)-AMP + GDP + phosphate + 2 H(+). It participates in purine metabolism; AMP biosynthesis via de novo pathway; AMP from IMP: step 1/2. Functionally, plays an important role in the de novo pathway of purine nucleotide biosynthesis. Catalyzes the first committed step in the biosynthesis of AMP from IMP. This Yersinia enterocolitica serotype O:8 / biotype 1B (strain NCTC 13174 / 8081) protein is Adenylosuccinate synthetase.